The primary structure comprises 81 residues: Costars family protein ABRACL (81 aa).

This sequence belongs to the costars family.

In Xenopus laevis (African clawed frog), this protein is Costars family protein ABRACL (abracl).